The chain runs to 115 residues: Large ribosomal subunit protein bL19 (115 aa).

This sequence belongs to the bacterial ribosomal protein bL19 family.

Functionally, this protein is located at the 30S-50S ribosomal subunit interface and may play a role in the structure and function of the aminoacyl-tRNA binding site. This chain is Large ribosomal subunit protein bL19, found in Francisella tularensis subsp. tularensis (strain WY96-3418).